The chain runs to 179 residues: Large ribosomal subunit protein uL5 (179 aa).

Belongs to the universal ribosomal protein uL5 family. As to quaternary structure, part of the 50S ribosomal subunit; part of the 5S rRNA/L5/L18/L25 subcomplex. Contacts the 5S rRNA and the P site tRNA. Forms a bridge to the 30S subunit in the 70S ribosome.

Functionally, this is one of the proteins that bind and probably mediate the attachment of the 5S RNA into the large ribosomal subunit, where it forms part of the central protuberance. In the 70S ribosome it contacts protein S13 of the 30S subunit (bridge B1b), connecting the 2 subunits; this bridge is implicated in subunit movement. Contacts the P site tRNA; the 5S rRNA and some of its associated proteins might help stabilize positioning of ribosome-bound tRNAs. This Staphylococcus saprophyticus subsp. saprophyticus (strain ATCC 15305 / DSM 20229 / NCIMB 8711 / NCTC 7292 / S-41) protein is Large ribosomal subunit protein uL5.